The sequence spans 409 residues: MSKYFKYISEKGITNLANYHYSGVDNSFCGNKFLKHWWNYCVNFTPLWLAPNIITLVGLLCNIGMYLIMYVHCPTLTEEAPRWCYFAVAFLIFAYQTLDNVDGKQARKTKSSSPLGELFDHVCDALSVAMFAIVMSATLRIGPYWTFFSFIVGMWPFYLAHWEEYHAGILVMGEFNGPTEAQVLFMIIEIITGIFGSDIWTYGTSTTVGKIATVFVSIGAVVTCLQNFTNTYKLENRMTFGKCLLQLTPICLFTALIVIWASVSNLITEQPHLFIMTLGILFGYIQSRYITQRVCHDDCSLFYPIFVPIIIVVLNSILASSDVHLVSETVALWILFSIACAQFLLFSYFTTQQLCDHLKIKVFTIPYPSNSGIGPSQEYENSLLSQMEEGSSSIGNSTDDINPSEIEEI.

The next 10 membrane-spanning stretches (helical) occupy residues 53–73 (IITL…YVHC), 83–103 (WCYF…NVDG), 115–135 (LGEL…AIVM), 141–161 (IGPY…YLAH), 183–203 (VLFM…WTYG), 205–225 (STTV…VTCL), 243–263 (CLLQ…WASV), 265–285 (NLIT…FGYI), 299–319 (CSLF…SILA), and 329–349 (TVAL…FSYF). Positions 388–401 (EEGSSSIGNSTDDI) are enriched in polar residues. The disordered stretch occupies residues 388-409 (EEGSSSIGNSTDDINPSEIEEI).

Belongs to the CDP-alcohol phosphatidyltransferase class-I family.

The protein localises to the membrane. This is an uncharacterized protein from Dictyostelium discoideum (Social amoeba).